The chain runs to 443 residues: Regulator of sigma E protease (443 aa).

His-21 is a Zn(2+) binding site. Glu-22 is an active-site residue. His-25 contributes to the Zn(2+) binding site. Residues 98–118 (FVIIAGPLANFIFAIFAYWVI) form a helical membrane-spanning segment. PDZ domains lie at 106–185 (ANFI…SPFN) and 198–287 (NWTF…TPVR). A run of 2 helical transmembrane segments spans residues 369–389 (LVYF…MNLF) and 423–443 (IGAA…FLRL).

This sequence belongs to the peptidase M50B family. As to quaternary structure, interacts with RseA. Zn(2+) is required as a cofactor.

It localises to the cell inner membrane. Functionally, a site-2 regulated intramembrane protease (S2P) that cleaves a peptide bond in the transmembrane region of RseA. Part of a regulated intramembrane proteolysis (RIP) cascade. Acts on DegS-cleaved RseA to release the cytoplasmic domain of RseA. This provides the cell with sigma-E (RpoE) activity through the proteolysis of RseA. This Haemophilus influenzae (strain ATCC 51907 / DSM 11121 / KW20 / Rd) protein is Regulator of sigma E protease (rsep).